The chain runs to 171 residues: ATP synthase subunit b 2 (171 aa).

The helical transmembrane segment at 9–29 (APWHHPVFWVAVAFVLFFVLF) threads the bilayer.

The protein belongs to the ATPase B chain family. As to quaternary structure, F-type ATPases have 2 components, F(1) - the catalytic core - and F(0) - the membrane proton channel. F(1) has five subunits: alpha(3), beta(3), gamma(1), delta(1), epsilon(1). F(0) has three main subunits: a(1), b(2) and c(10-14). The alpha and beta chains form an alternating ring which encloses part of the gamma chain. F(1) is attached to F(0) by a central stalk formed by the gamma and epsilon chains, while a peripheral stalk is formed by the delta and b chains.

The protein localises to the cell inner membrane. In terms of biological role, f(1)F(0) ATP synthase produces ATP from ADP in the presence of a proton or sodium gradient. F-type ATPases consist of two structural domains, F(1) containing the extramembraneous catalytic core and F(0) containing the membrane proton channel, linked together by a central stalk and a peripheral stalk. During catalysis, ATP synthesis in the catalytic domain of F(1) is coupled via a rotary mechanism of the central stalk subunits to proton translocation. Its function is as follows. Component of the F(0) channel, it forms part of the peripheral stalk, linking F(1) to F(0). The protein is ATP synthase subunit b 2 of Granulibacter bethesdensis (strain ATCC BAA-1260 / CGDNIH1).